The chain runs to 279 residues: Oxygen-dependent coproporphyrinogen-III oxidase (279 aa).

S102 contributes to the substrate binding site. A divalent metal cation contacts are provided by H106 and H116. The Proton donor role is filled by H116. 118–120 (NTR) serves as a coordination point for substrate. Residues H149 and H179 each coordinate a divalent metal cation. Positions 244–279 (YVEFNLLYDRGTKFGLMTDGNVEAILMSLPPEVKFN) are important for dimerization.

This sequence belongs to the aerobic coproporphyrinogen-III oxidase family. In terms of assembly, homodimer. The cofactor is a divalent metal cation.

The protein localises to the cytoplasm. It catalyses the reaction coproporphyrinogen III + O2 + 2 H(+) = protoporphyrinogen IX + 2 CO2 + 2 H2O. It participates in porphyrin-containing compound metabolism; protoporphyrin-IX biosynthesis; protoporphyrinogen-IX from coproporphyrinogen-III (O2 route): step 1/1. In terms of biological role, involved in the heme biosynthesis. Catalyzes the aerobic oxidative decarboxylation of propionate groups of rings A and B of coproporphyrinogen-III to yield the vinyl groups in protoporphyrinogen-IX. The protein is Oxygen-dependent coproporphyrinogen-III oxidase of Rickettsia felis (strain ATCC VR-1525 / URRWXCal2) (Rickettsia azadi).